Consider the following 2871-residue polypeptide: Desmoplakin (2871 aa).

The interaction with PKP1, JUP, PKP2 stretch occupies residues methionine 1–glutamate 584. Residues methionine 1 to lysine 1056 are globular 1. 2 positions are modified to phosphoserine: serine 22 and serine 53. A Phosphotyrosine modification is found at tyrosine 56. Position 61 is a phosphothreonine (threonine 61). A phosphoserine mark is found at serine 165, serine 166, and serine 176. Spectrin repeat units lie at residues serine 178 to glutamine 271 and leucine 272 to asparagine 375. One copy of the Spectrin 3a repeat lies at alanine 376–valine 446. An SH3 domain is found at asparagine 458–proline 515. The stretch at asparagine 516–lysine 545 is one Spectrin 3b repeat. Spectrin repeat units lie at residues serine 546–proline 627, valine 654–threonine 769, and valine 770–lysine 883. The stretch at serine 1018–arginine 1945 forms a coiled coil. The central fibrous rod domain stretch occupies residues phenylalanine 1057–arginine 1945. Serine 1658, serine 1708, and serine 2024 each carry phosphoserine. The tract at residues proline 1946 to histidine 2871 is globular 2. A 4.5 X 38 AA tandem repeats (Domain A) region spans residues threonine 1960 to methionine 2208. Plectin repeat units follow at residues glutamine 2009–threonine 2045, valine 2046–arginine 2083, glutamine 2084–glycine 2121, methionine 2122–tyrosine 2159, asparagine 2163–glycine 2197, leucine 2198–valine 2233, lysine 2251–alanine 2288, leucine 2289–lysine 2326, glutamate 2327–glycine 2364, isoleucine 2365–serine 2402, serine 2406–glycine 2440, serine 2456–phenylalanine 2493, threonine 2507–phenylalanine 2544, serine 2610–glycine 2647, glutamine 2648–alanine 2685, glutamine 2724–alanine 2761, and glutamine 2762–glycine 2799. A phosphoserine mark is found at serine 2207, serine 2209, and serine 2225. Residues aspartate 2244–leucine 2446 form a 4.5 X 38 AA tandem repeats (Domain B) region. Residues phenylalanine 2609–alanine 2822 form a 4.5 X 38 AA tandem repeats (Domain C) region. Serine 2810 and serine 2815 each carry phosphoserine. Polar residues predominate over residues serine 2810–proline 2823. The segment at serine 2810–histidine 2871 is disordered. Residue tyrosine 2817 is modified to Phosphotyrosine. Phosphoserine is present on residues serine 2820, serine 2821, and serine 2825. The interval glycine 2824–arginine 2847 is 6 X 4 AA tandem repeats of G-S-R-[SR]. Residues glycine 2824–arginine 2847 show a composition bias toward low complexity. Arginine 2826 and arginine 2847 each carry omega-N-methylarginine. Serine 2849 is subject to Phosphoserine. Position 2853 is a phosphothreonine (threonine 2853). Residues serine 2856–histidine 2871 are compositionally biased toward low complexity. Phosphoserine is present on serine 2868.

It belongs to the plakin or cytolinker family. As to quaternary structure, homodimer. Interacts with COL17A1 (via cytoplasmic region). Interacts with DSC2. Interacts with PKP2. Interacts with PKP1. Interacts weakly with TMEM65. In terms of processing, phosphorylation at Ser-2849 increases association with intermediate filament cytokeratin, potentially facilitating interaction between desmosome junctions and intermediate filament architecture. In terms of tissue distribution, expressed in oral mucosa (at protein level). Expressed in arrector pili muscle (at protein level). Expressed in the heart in the heart (at protein level). Apparently an obligate constituent of all desmosomes. As to expression, resides predominantly in tissues and cells of stratified origin.

Its subcellular location is the cell junction. It is found in the desmosome. The protein localises to the cell membrane. The protein resides in the cytoplasm. Major high molecular weight protein of desmosomes. Regulates profibrotic gene expression in cardiomyocytes via activation of the MAPK14/p38 MAPK signaling cascade and increase in TGFB1 protein abundance. This chain is Desmoplakin (DSP), found in Homo sapiens (Human).